A 912-amino-acid chain; its full sequence is Tubulin polyglutamylase TTLL7 (912 aa).

One can recognise a TTL domain in the interval 38–390; the sequence is KGIITANVAG…RTSDKRKNLA (353 aa). ATP-binding positions include K160, 166–167, 188–191, and 201–203; these read MG, QEYI, and KFD. R227 is an L-glutamate binding site. Residue 249–250 coordinates ATP; it reads TN. Y251, S252, and K271 together coordinate L-glutamate. Mg(2+) contacts are provided by D336, E349, and N351. Residue K367 participates in L-glutamate binding. A c-MTBD region region spans residues 388-450; sequence NLAKQKAEAQ…VSQEEHENRH (63 aa). 2 disordered regions span residues 547–570 and 658–688; these read YGSSDSSYDSSSSSSNSELDENEK and PTSASRSHSLNRASSYARHLPHGSDTGSTNT. The segment covering 549-563 has biased composition (low complexity); it reads SSDSSYDSSSSSSNS. Positions 659 to 671 are enriched in polar residues; that stretch reads TSASRSHSLNRAS.

The protein belongs to the tubulin--tyrosine ligase family. Interacts with both alpha- and beta-tubulin (via C-terminal tubulin tails). Mg(2+) is required as a cofactor. As to expression, highly expressed in brain, testis and trachea. Expressed in brain, heart, kidney, liver, lung, muscle and trachea. In the brain, highly expressed in hippocampus, thalamus, olfactory bulb and cerebellum cortex, corpus callosum and striatum.

The protein resides in the cell projection. The protein localises to the cilium. Its subcellular location is the cytoplasm. It localises to the cytoskeleton. It is found in the cilium basal body. The protein resides in the dendrite. The protein localises to the perikaryon. It catalyses the reaction L-glutamyl-[protein] + L-glutamate + ATP = gamma-L-glutamyl-L-glutamyl-[protein] + ADP + phosphate + H(+). It carries out the reaction (L-glutamyl)(n)-gamma-L-glutamyl-L-glutamyl-[protein] + L-glutamate + ATP = (L-glutamyl)(n+1)-gamma-L-glutamyl-L-glutamyl-[protein] + ADP + phosphate + H(+). Its function is as follows. Polyglutamylase which modifies tubulin, generating polyglutamate side chains of variable lengths on the gamma-carboxyl group of specific glutamate residues within the C-terminal tail of tubulin. Mediates both ATP-dependent initiation and elongation steps of the polyglutamylation reaction. Preferentially modifies the beta-tubulin tail over an alpha-tail. Competes with monoglycylase TTLL3 for modification site on beta-tubulin substrate, thereby creating an anticorrelation between glycylation and glutamylation reactions. Required for neurite growth; responsible for the strong increase in tubulin polyglutamylation during postnatal neuronal maturation. This Mus musculus (Mouse) protein is Tubulin polyglutamylase TTLL7.